The following is a 234-amino-acid chain: Ubiquinone biosynthesis O-methyltransferase (234 aa).

Residues arginine 39, glycine 59, aspartate 80, and methionine 124 each coordinate S-adenosyl-L-methionine.

The protein belongs to the methyltransferase superfamily. UbiG/COQ3 family.

It catalyses the reaction a 3-demethylubiquinol + S-adenosyl-L-methionine = a ubiquinol + S-adenosyl-L-homocysteine + H(+). The catalysed reaction is a 3-(all-trans-polyprenyl)benzene-1,2-diol + S-adenosyl-L-methionine = a 2-methoxy-6-(all-trans-polyprenyl)phenol + S-adenosyl-L-homocysteine + H(+). Its pathway is cofactor biosynthesis; ubiquinone biosynthesis. Its function is as follows. O-methyltransferase that catalyzes the 2 O-methylation steps in the ubiquinone biosynthetic pathway. The chain is Ubiquinone biosynthesis O-methyltransferase from Aliivibrio fischeri (strain MJ11) (Vibrio fischeri).